The chain runs to 520 residues: Protein EARLY FLOWERING 5 (520 aa).

Short sequence motifs (nuclear localization signal) lie at residues 16-23, 52-59, and 71-78; these read YRKQIRKR, IRKLDMSK, and KKRQLEDT. The disordered stretch occupies residues 83 to 410; sequence VKKRKEYDEK…PPSSFQDGQA (328 aa). Composition is skewed to basic and acidic residues over residues 87–97 and 114–126; these read KEYDEKKKEQG and LTGEEDLKPEDSV. Residues 148-168 show a composition bias toward low complexity; that stretch reads SSIGLAISSDGASSSSAALSS. Pro residues-rich tracts occupy residues 198–207, 216–227, and 235–253; these read PLPPLPPLPP, SPFPPPPPGPPP, and PPLPPPPQLPQSSQPPPPG. Composition is skewed to polar residues over residues 267 to 281, 300 to 312, and 326 to 343; these read SDFTFDNRMNANITS, AESNASSFQNANL, and QQHQSTFAGAAASLTNFQ. Composition is skewed to pro residues over residues 346 to 369 and 378 to 403; these read VHPPPGMLRFPPPPPPLDMHPPHP and PRPPYGPPPGPPPMMRPPLPPGPPPS.

In terms of tissue distribution, in seedlings, mostly expressed in the shoot apical meristem (SAM) and root tip.

The protein resides in the nucleus. Functionally, involved in the regulation of flowering time in both long and short days. In Arabidopsis thaliana (Mouse-ear cress), this protein is Protein EARLY FLOWERING 5.